We begin with the raw amino-acid sequence, 152 residues long: Deoxyuridine 5'-triphosphate nucleotidohydrolase (152 aa).

Substrate is bound by residues 71–73 (RSG), Asn-84, 88–90 (LID), and Met-98.

The protein belongs to the dUTPase family. The cofactor is Mg(2+).

The catalysed reaction is dUTP + H2O = dUMP + diphosphate + H(+). It functions in the pathway pyrimidine metabolism; dUMP biosynthesis; dUMP from dCTP (dUTP route): step 2/2. This enzyme is involved in nucleotide metabolism: it produces dUMP, the immediate precursor of thymidine nucleotides and it decreases the intracellular concentration of dUTP so that uracil cannot be incorporated into DNA. The polypeptide is Deoxyuridine 5'-triphosphate nucleotidohydrolase (Shewanella halifaxensis (strain HAW-EB4)).